The primary structure comprises 233 residues: 7-cyano-7-deazaguanine synthase (233 aa).

ATP is bound at residue 7-17 (LSGGLDSAVTS). Zn(2+) is bound by residues Cys-195, Cys-206, Cys-209, and Cys-212.

Belongs to the QueC family. The cofactor is Zn(2+).

The catalysed reaction is 7-carboxy-7-deazaguanine + NH4(+) + ATP = 7-cyano-7-deazaguanine + ADP + phosphate + H2O + H(+). It participates in purine metabolism; 7-cyano-7-deazaguanine biosynthesis. Its function is as follows. Catalyzes the ATP-dependent conversion of 7-carboxy-7-deazaguanine (CDG) to 7-cyano-7-deazaguanine (preQ(0)). This is 7-cyano-7-deazaguanine synthase from Methanococcus maripaludis (strain DSM 14266 / JCM 13030 / NBRC 101832 / S2 / LL).